The primary structure comprises 82 residues: Sec-independent protein translocase protein TatA (82 aa).

Residues 1 to 21 form a helical membrane-spanning segment; it reads MGLSTTHLIIFLVIIVLIFGT.

The protein belongs to the TatA/E family. In terms of assembly, the Tat system comprises two distinct complexes: a TatABC complex, containing multiple copies of TatA, TatB and TatC subunits, and a separate TatA complex, containing only TatA subunits. Substrates initially bind to the TatABC complex, which probably triggers association of the separate TatA complex to form the active translocon.

It localises to the cell inner membrane. In terms of biological role, part of the twin-arginine translocation (Tat) system that transports large folded proteins containing a characteristic twin-arginine motif in their signal peptide across membranes. TatA could form the protein-conducting channel of the Tat system. The protein is Sec-independent protein translocase protein TatA of Leptothrix cholodnii (strain ATCC 51168 / LMG 8142 / SP-6) (Leptothrix discophora (strain SP-6)).